The chain runs to 393 residues: Biotin synthase, mitochondrial (393 aa).

Residues 1-20 constitute a mitochondrion transit peptide; sequence MSVSFTRSFPRAFIRSYGTV. One can recognise a Radical SAM core domain in the interval 81–310; sequence SAIQMCTLMN…ATIVRLAAGR (230 aa). Positions 96, 100, and 103 each coordinate [4Fe-4S] cluster. [2Fe-2S] cluster is bound by residues Cys-140, Cys-173, Cys-233, and Arg-305. The tract at residues 366-393 is disordered; it reads NAATPQQHVDSVAHESEKNPAAPAAEAL.

It belongs to the radical SAM superfamily. Biotin synthase family. [4Fe-4S] cluster serves as cofactor. Requires [2Fe-2S] cluster as cofactor.

It is found in the mitochondrion. It carries out the reaction (4R,5S)-dethiobiotin + (sulfur carrier)-SH + 2 reduced [2Fe-2S]-[ferredoxin] + 2 S-adenosyl-L-methionine = (sulfur carrier)-H + biotin + 2 5'-deoxyadenosine + 2 L-methionine + 2 oxidized [2Fe-2S]-[ferredoxin]. Its pathway is cofactor biosynthesis; biotin biosynthesis; biotin from 7,8-diaminononanoate: step 2/2. Functionally, biotin synthase; part of the cluster involved in the biosynthesis of biotin (also known as vitamin B8 or vitamin H), a water-soluble vitamin that functions as a prosthetic group of many carboxylases, such as acetyl-CoA carboxylase and pyruvate carboxylase. Catalyzes the conversion of dethiobiotin (DTB) to biotin by the insertion of a sulfur atom into dethiobiotin via a radical-based mechanism. This is Biotin synthase, mitochondrial from Emericella nidulans (strain FGSC A4 / ATCC 38163 / CBS 112.46 / NRRL 194 / M139) (Aspergillus nidulans).